The primary structure comprises 439 residues: tRNA-2-methylthio-N(6)-dimethylallyladenosine synthase (439 aa).

Residues K2–R115 enclose the MTTase N-terminal domain. [4Fe-4S] cluster is bound by residues C11, C47, C78, C155, C159, and C162. Residues N141–E372 form the Radical SAM core domain. A TRAM domain is found at Q375–H439.

Belongs to the methylthiotransferase family. MiaB subfamily. Monomer. [4Fe-4S] cluster serves as cofactor.

It localises to the cytoplasm. It catalyses the reaction N(6)-dimethylallyladenosine(37) in tRNA + (sulfur carrier)-SH + AH2 + 2 S-adenosyl-L-methionine = 2-methylsulfanyl-N(6)-dimethylallyladenosine(37) in tRNA + (sulfur carrier)-H + 5'-deoxyadenosine + L-methionine + A + S-adenosyl-L-homocysteine + 2 H(+). Catalyzes the methylthiolation of N6-(dimethylallyl)adenosine (i(6)A), leading to the formation of 2-methylthio-N6-(dimethylallyl)adenosine (ms(2)i(6)A) at position 37 in tRNAs that read codons beginning with uridine. This is tRNA-2-methylthio-N(6)-dimethylallyladenosine synthase from Wolbachia pipientis wMel.